The chain runs to 111 residues: Urease subunit beta (111 aa).

The protein belongs to the urease beta subunit family. Heterotrimer of UreA (gamma), UreB (beta) and UreC (alpha) subunits. Three heterotrimers associate to form the active enzyme.

It is found in the cytoplasm. The catalysed reaction is urea + 2 H2O + H(+) = hydrogencarbonate + 2 NH4(+). Its pathway is nitrogen metabolism; urea degradation; CO(2) and NH(3) from urea (urease route): step 1/1. The polypeptide is Urease subunit beta (Psychrobacter cryohalolentis (strain ATCC BAA-1226 / DSM 17306 / VKM B-2378 / K5)).